The primary structure comprises 189 residues: GTPase NRas (189 aa).

10–17 (GAGGVGKS) serves as a coordination point for GTP. The Effector region signature appears at 32–40 (YDPTIEDSY). GTP-binding positions include 57-61 (DTAGQ) and 116-119 (NKCD). The segment at 166-185 (YRMKKLDSSEDNNQGCIRIP) is hypervariable region. Cys-181 carries the S-palmitoyl cysteine lipid modification. A lipid anchor (S-farnesyl cysteine) is attached at Cys-186. A propeptide spans 187–189 (KLM) (removed in mature form).

The protein belongs to the small GTPase superfamily. Ras family. Post-translationally, palmitoylated by the ZDHHC9-GOLGA7 complex. Depalmitoylated by abhd17a, abhd17b and abhd17c. A continuous cycle of de- and re-palmitoylation regulates rapid exchange between plasma membrane and Golgi.

The protein resides in the cell membrane. It is found in the golgi apparatus membrane. It catalyses the reaction GTP + H2O = GDP + phosphate + H(+). Its activity is regulated as follows. Alternates between an inactive form bound to GDP and an active form bound to GTP. Activated by a guanine nucleotide-exchange factor (GEF) and inactivated by a GTPase-activating protein (GAP). Its function is as follows. Ras proteins bind GDP/GTP and possess intrinsic GTPase activity. The sequence is that of GTPase NRas (nras) from Xenopus laevis (African clawed frog).